The following is a 95-amino-acid chain: Aspartyl/glutamyl-tRNA(Asn/Gln) amidotransferase subunit C (95 aa).

This sequence belongs to the GatC family. Heterotrimer of A, B and C subunits.

It catalyses the reaction L-glutamyl-tRNA(Gln) + L-glutamine + ATP + H2O = L-glutaminyl-tRNA(Gln) + L-glutamate + ADP + phosphate + H(+). The catalysed reaction is L-aspartyl-tRNA(Asn) + L-glutamine + ATP + H2O = L-asparaginyl-tRNA(Asn) + L-glutamate + ADP + phosphate + 2 H(+). Allows the formation of correctly charged Asn-tRNA(Asn) or Gln-tRNA(Gln) through the transamidation of misacylated Asp-tRNA(Asn) or Glu-tRNA(Gln) in organisms which lack either or both of asparaginyl-tRNA or glutaminyl-tRNA synthetases. The reaction takes place in the presence of glutamine and ATP through an activated phospho-Asp-tRNA(Asn) or phospho-Glu-tRNA(Gln). This chain is Aspartyl/glutamyl-tRNA(Asn/Gln) amidotransferase subunit C, found in Pelodictyon phaeoclathratiforme (strain DSM 5477 / BU-1).